The following is a 491-amino-acid chain: Ligand-gated ion channel 50 (491 aa).

An N-terminal signal peptide occupies residues 1–19; it reads MRFLLVLQLVFFYFSAATT. Asn55 and Asn101 each carry an N-linked (GlcNAc...) asparagine glycan. Cys157 and Cys171 are disulfide-bonded. A run of 3 helical transmembrane segments spans residues 241-261, 265-287, and 302-322; these read LFQSYFPTSLTVISSWVGFFF, SVSARITLGVSSLLALTFQFGNV, and VWMIFSVIFIFCTLVELAIVC. An N-linked (GlcNAc...) asparagine glycan is attached at Asn418. The chain crosses the membrane as a helical span at residues 465 to 485; sequence MIMFPLSFLIFNVVYWSIYFM.

It belongs to the ligand-gated ion channel (TC 1.A.9) family.

It localises to the postsynaptic cell membrane. Its subcellular location is the cell membrane. In Caenorhabditis elegans, this protein is Ligand-gated ion channel 50 (lgc-50).